Here is a 685-residue protein sequence, read N- to C-terminus: DNA ligase (685 aa).

Residues 39 to 43 (DGEYD), 88 to 89 (SL), and Glu-119 contribute to the NAD(+) site. Lys-121 functions as the N6-AMP-lysine intermediate in the catalytic mechanism. Positions 142, 182, 302, and 326 each coordinate NAD(+). Residues Cys-420, Cys-423, Cys-438, and Cys-443 each coordinate Zn(2+). Residues 606–685 (DNATFFSEKR…QTFLEHLDRG (80 aa)) form the BRCT domain.

This sequence belongs to the NAD-dependent DNA ligase family. LigA subfamily. Mg(2+) serves as cofactor. It depends on Mn(2+) as a cofactor.

It carries out the reaction NAD(+) + (deoxyribonucleotide)n-3'-hydroxyl + 5'-phospho-(deoxyribonucleotide)m = (deoxyribonucleotide)n+m + AMP + beta-nicotinamide D-nucleotide.. In terms of biological role, DNA ligase that catalyzes the formation of phosphodiester linkages between 5'-phosphoryl and 3'-hydroxyl groups in double-stranded DNA using NAD as a coenzyme and as the energy source for the reaction. It is essential for DNA replication and repair of damaged DNA. This chain is DNA ligase, found in Desulforapulum autotrophicum (strain ATCC 43914 / DSM 3382 / VKM B-1955 / HRM2) (Desulfobacterium autotrophicum).